The following is a 248-amino-acid chain: Adenosylcobinamide-GDP ribazoletransferase (248 aa).

The next 7 membrane-spanning stretches (helical) occupy residues 32 to 52 (FPLV…IGMV), 60 to 80 (ALLV…DGLA), 103 to 123 (AVGS…WIAL), 134 to 154 (WIVS…SVMT), 170 to 190 (AGGW…VLVM), 195 to 215 (LPIV…GMLA), and 227 to 247 (LGAS…LLLF).

The protein belongs to the CobS family. Requires Mg(2+) as cofactor.

It is found in the cell inner membrane. The catalysed reaction is alpha-ribazole + adenosylcob(III)inamide-GDP = adenosylcob(III)alamin + GMP + H(+). It carries out the reaction alpha-ribazole 5'-phosphate + adenosylcob(III)inamide-GDP = adenosylcob(III)alamin 5'-phosphate + GMP + H(+). Its pathway is cofactor biosynthesis; adenosylcobalamin biosynthesis; adenosylcobalamin from cob(II)yrinate a,c-diamide: step 7/7. Joins adenosylcobinamide-GDP and alpha-ribazole to generate adenosylcobalamin (Ado-cobalamin). Also synthesizes adenosylcobalamin 5'-phosphate from adenosylcobinamide-GDP and alpha-ribazole 5'-phosphate. This Prosthecochloris aestuarii (strain DSM 271 / SK 413) protein is Adenosylcobinamide-GDP ribazoletransferase.